Consider the following 548-residue polypeptide: Probable malate:quinone oxidoreductase (548 aa).

A disordered region spans residues 520–548; it reads YDRPQAADSTPKPQLKPQPVQKEVADIAL. The span at 530 to 541 shows a compositional bias: low complexity; it reads PKPQLKPQPVQK.

The protein belongs to the MQO family. FAD is required as a cofactor.

It catalyses the reaction (S)-malate + a quinone = a quinol + oxaloacetate. The protein operates within carbohydrate metabolism; tricarboxylic acid cycle; oxaloacetate from (S)-malate (quinone route): step 1/1. The sequence is that of Probable malate:quinone oxidoreductase from Shigella dysenteriae serotype 1 (strain Sd197).